The following is a 345-amino-acid chain: Tubulin-folding cofactor C (345 aa).

At methionine 1 the chain carries N-acetylmethionine. Positions 1–10 (MEDDGQSSVA) are enriched in polar residues. The tract at residues 1-83 (MEDDGQSSVA…SRLASSSTDS (83 aa)) is disordered. Basic and acidic residues predominate over residues 23 to 39 (DMLERLSARHQARKSDS). The segment covering 40–55 (PDSSSSSSSTLESTSS) has biased composition (low complexity). Basic and acidic residues predominate over residues 61-73 (SDSKRSIESRIAE). Low complexity predominate over residues 74-83 (SRLASSSTDS). The C-CAP/cofactor C-like domain maps to 169 to 318 (PPKLVPVRDS…NWANVDDFRW (150 aa)).

Belongs to the TBCC family. As to quaternary structure, supercomplex made of cofactors A to E. Cofactors A and D function by capturing and stabilizing tubulin in a quasi-native conformation. Cofactor E binds to the cofactor D-tubulin complex; interaction with cofactor C then causes the release of tubulin polypeptides that are committed to the native state. In terms of tissue distribution, ubiquitously expressed (at protein level). Present in leaves, roots, flowers, and stems.

Its subcellular location is the cytoplasm. In terms of biological role, essential tubulin-folding protein involved in the final step of the tubulin folding pathway. Required for continuous microtubule cytoskeleton organization, mitotic division, cytokinesis, and to couple cell cycle progression to cell division in embryos and endosperms. Not essential for cell viability. Binds probably to the multimeric supercomplex, stimulating GTP hydrolysis by the bound beta-tubulin and the release of the alpha-/beta-tubulin heterodimer. This Arabidopsis thaliana (Mouse-ear cress) protein is Tubulin-folding cofactor C (TFCC).